The sequence spans 110 residues: Cytochrome c6 (110 aa).

An N-terminal signal peptide occupies residues 1–25; sequence MKKLVSSVILALILFGFSWVSPAFA. Heme c is bound by residues cysteine 39, cysteine 42, histidine 43, and methionine 83.

It belongs to the cytochrome c family. PetJ subfamily. As to quaternary structure, monomer. Binds 1 heme c group covalently per subunit.

It is found in the cellular thylakoid lumen. Its function is as follows. Functions as an electron carrier between membrane-bound cytochrome b6-f and photosystem I in oxygenic photosynthesis. In Gloeothece citriformis (strain PCC 7424) (Cyanothece sp. (strain PCC 7424)), this protein is Cytochrome c6.